The following is a 312-amino-acid chain: Malate dehydrogenase (312 aa).

NAD(+)-binding positions include 7–13 and Asp-34; that span reads GAAGGIG. Substrate contacts are provided by Arg-81 and Arg-87. Residues Asn-94 and 117–119 each bind NAD(+); that span reads ITN. Substrate-binding residues include Asn-119 and Arg-153. His-177 (proton acceptor) is an active-site residue. NAD(+) is bound at residue Met-227.

This sequence belongs to the LDH/MDH superfamily. MDH type 1 family. In terms of assembly, homodimer.

It catalyses the reaction (S)-malate + NAD(+) = oxaloacetate + NADH + H(+). In terms of biological role, catalyzes the reversible oxidation of malate to oxaloacetate. This is Malate dehydrogenase from Escherichia coli O17:K52:H18 (strain UMN026 / ExPEC).